The sequence spans 122 residues: MARIAGVNIPTNKRVVIALQYIHGIGAKKAEEITQKVNIPAERRVNQLTDAEVLQIRETIDRDYLVEGDLRREVSMNIKRLMDLGAYRGLRHRKQLPVRGQRTHTNARTRKGKAKPIAGKKK.

Residues 92–122 (HRKQLPVRGQRTHTNARTRKGKAKPIAGKKK) are disordered.

This sequence belongs to the universal ribosomal protein uS13 family. Part of the 30S ribosomal subunit. Forms a loose heterodimer with protein S19. Forms two bridges to the 50S subunit in the 70S ribosome.

Its function is as follows. Located at the top of the head of the 30S subunit, it contacts several helices of the 16S rRNA. In the 70S ribosome it contacts the 23S rRNA (bridge B1a) and protein L5 of the 50S subunit (bridge B1b), connecting the 2 subunits; these bridges are implicated in subunit movement. Contacts the tRNAs in the A and P-sites. The chain is Small ribosomal subunit protein uS13 from Methylobacterium radiotolerans (strain ATCC 27329 / DSM 1819 / JCM 2831 / NBRC 15690 / NCIMB 10815 / 0-1).